The primary structure comprises 201 residues: Recombination protein RecR (201 aa).

A C4-type zinc finger spans residues 60–75 (CRSCGNVDTSDPCTIC). Positions 83–178 (TTLVVVEDVS…TVTRLAHGVP (96 aa)) constitute a Toprim domain.

The protein belongs to the RecR family.

May play a role in DNA repair. It seems to be involved in an RecBC-independent recombinational process of DNA repair. It may act with RecF and RecO. This is Recombination protein RecR from Methylorubrum extorquens (strain CM4 / NCIMB 13688) (Methylobacterium extorquens).